The chain runs to 537 residues: Glutamate--tRNA ligase (537 aa).

Positions 9–19 match the 'HIGH' region motif; the sequence is PSPTGLQHIGG. Residues Cys-125, Cys-127, Cys-152, and Glu-154 each contribute to the Zn(2+) site. The 'KMSKS' region motif lies at 270-274; it reads KLSKR. An ATP-binding site is contributed by Lys-273.

Belongs to the class-I aminoacyl-tRNA synthetase family. Glutamate--tRNA ligase type 1 subfamily. As to quaternary structure, monomer. Requires Zn(2+) as cofactor.

The protein localises to the cytoplasm. The enzyme catalyses tRNA(Glu) + L-glutamate + ATP = L-glutamyl-tRNA(Glu) + AMP + diphosphate. Its function is as follows. Catalyzes the attachment of glutamate to tRNA(Glu) in a two-step reaction: glutamate is first activated by ATP to form Glu-AMP and then transferred to the acceptor end of tRNA(Glu). The chain is Glutamate--tRNA ligase from Treponema pallidum (strain Nichols).